The sequence spans 246 residues: Uroporphyrinogen-III synthase (246 aa).

The protein belongs to the uroporphyrinogen-III synthase family. As to quaternary structure, monomer.

The enzyme catalyses hydroxymethylbilane = uroporphyrinogen III + H2O. It participates in porphyrin-containing compound metabolism; protoporphyrin-IX biosynthesis; coproporphyrinogen-III from 5-aminolevulinate: step 3/4. Catalyzes cyclization of the linear tetrapyrrole, hydroxymethylbilane, to the macrocyclic uroporphyrinogen III. This Escherichia coli (strain K12) protein is Uroporphyrinogen-III synthase (hemD).